A 477-amino-acid chain; its full sequence is UDP-N-acetylmuramate--L-alanine ligase (477 aa).

118-124 (GTHGKTS) is an ATP binding site.

Belongs to the MurCDEF family.

The protein resides in the cytoplasm. It catalyses the reaction UDP-N-acetyl-alpha-D-muramate + L-alanine + ATP = UDP-N-acetyl-alpha-D-muramoyl-L-alanine + ADP + phosphate + H(+). The protein operates within cell wall biogenesis; peptidoglycan biosynthesis. In terms of biological role, cell wall formation. This is UDP-N-acetylmuramate--L-alanine ligase from Corynebacterium diphtheriae (strain ATCC 700971 / NCTC 13129 / Biotype gravis).